Reading from the N-terminus, the 154-residue chain is Ascorbate-specific PTS system EIIA component (154 aa).

Residues 6–150 enclose the PTS EIIA type-2 domain; the sequence is SLAENNSIRL…QEVLDLIDRT (145 aa). Catalysis depends on His68, which acts as the Tele-phosphohistidine intermediate. A Phosphohistidine modification is found at His68.

It localises to the cytoplasm. The phosphoenolpyruvate-dependent sugar phosphotransferase system (sugar PTS), a major carbohydrate active transport system, catalyzes the phosphorylation of incoming sugar substrates concomitantly with their translocation across the cell membrane. The enzyme II UlaABC PTS system is involved in ascorbate transport. This is Ascorbate-specific PTS system EIIA component (ulaC) from Salmonella typhi.